Consider the following 55-residue polypeptide: Large ribosomal subunit protein bL33 (55 aa).

Residues 1 to 11 (MAKGSREKIKL) are compositionally biased toward basic and acidic residues. Positions 1 to 32 (MAKGSREKIKLESSASTGHFYTTSKNKRTKPE) are disordered. Residues 13-24 (SSASTGHFYTTS) are compositionally biased toward polar residues.

Belongs to the bacterial ribosomal protein bL33 family.

This Polynucleobacter necessarius subsp. necessarius (strain STIR1) protein is Large ribosomal subunit protein bL33.